The primary structure comprises 629 residues: DNA-directed RNA polymerase subunit beta' (629 aa).

Zn(2+) contacts are provided by C70, C72, C85, and C88. Mg(2+) is bound by residues D472, D474, and D476.

This sequence belongs to the RNA polymerase beta' chain family. RpoC1 subfamily. In plastids the minimal PEP RNA polymerase catalytic core is composed of four subunits: alpha, beta, beta', and beta''. When a (nuclear-encoded) sigma factor is associated with the core the holoenzyme is formed, which can initiate transcription. Requires Mg(2+) as cofactor. It depends on Zn(2+) as a cofactor.

It localises to the plastid. It is found in the chloroplast. It catalyses the reaction RNA(n) + a ribonucleoside 5'-triphosphate = RNA(n+1) + diphosphate. In terms of biological role, DNA-dependent RNA polymerase catalyzes the transcription of DNA into RNA using the four ribonucleoside triphosphates as substrates. The chain is DNA-directed RNA polymerase subunit beta' from Porphyra purpurea (Red seaweed).